We begin with the raw amino-acid sequence, 132 residues long: Phosphoribosyl-AMP cyclohydrolase (132 aa).

Mg(2+) is bound at residue Asp86. Cys87 lines the Zn(2+) pocket. Mg(2+) contacts are provided by Asp88 and Asp90. Residues Cys103 and Cys110 each coordinate Zn(2+).

Belongs to the PRA-CH family. Homodimer. The cofactor is Mg(2+). Requires Zn(2+) as cofactor.

It is found in the cytoplasm. The enzyme catalyses 1-(5-phospho-beta-D-ribosyl)-5'-AMP + H2O = 1-(5-phospho-beta-D-ribosyl)-5-[(5-phospho-beta-D-ribosylamino)methylideneamino]imidazole-4-carboxamide. Its pathway is amino-acid biosynthesis; L-histidine biosynthesis; L-histidine from 5-phospho-alpha-D-ribose 1-diphosphate: step 3/9. Its function is as follows. Catalyzes the hydrolysis of the adenine ring of phosphoribosyl-AMP. The chain is Phosphoribosyl-AMP cyclohydrolase from Clavibacter michiganensis subsp. michiganensis (strain NCPPB 382).